The following is a 479-amino-acid chain: Ribulose bisphosphate carboxylase large chain (479 aa).

Residues 1–2 (MS) constitute a propeptide that is removed on maturation. Positions 123 and 173 each coordinate substrate. The active-site Proton acceptor is lysine 175. Residue lysine 177 coordinates substrate. 3 residues coordinate Mg(2+): lysine 201, aspartate 203, and glutamate 204. At lysine 201 the chain carries N6-carboxylysine. At serine 208 the chain carries Phosphoserine. The active-site Proton acceptor is histidine 294. Residues arginine 295 and histidine 327 each contribute to the substrate site. Phosphothreonine is present on threonine 330. Serine 379 is a substrate binding site.

It belongs to the RuBisCO large chain family. Type I subfamily. Heterohexadecamer of 8 large chains and 8 small chains; disulfide-linked. The disulfide link is formed within the large subunit homodimers. It depends on Mg(2+) as a cofactor. In terms of processing, the disulfide bond which can form in the large chain dimeric partners within the hexadecamer appears to be associated with oxidative stress and protein turnover.

The protein localises to the plastid. Its subcellular location is the chloroplast. The catalysed reaction is 2 (2R)-3-phosphoglycerate + 2 H(+) = D-ribulose 1,5-bisphosphate + CO2 + H2O. The enzyme catalyses D-ribulose 1,5-bisphosphate + O2 = 2-phosphoglycolate + (2R)-3-phosphoglycerate + 2 H(+). In terms of biological role, ruBisCO catalyzes two reactions: the carboxylation of D-ribulose 1,5-bisphosphate, the primary event in carbon dioxide fixation, as well as the oxidative fragmentation of the pentose substrate in the photorespiration process. Both reactions occur simultaneously and in competition at the same active site. The chain is Ribulose bisphosphate carboxylase large chain from Arabis hirsuta (Hairy rock-cress).